A 192-amino-acid chain; its full sequence is Cytidylate kinase (192 aa).

7-15 (GPPGAGKST) contributes to the ATP binding site.

The protein belongs to the cytidylate kinase family. Type 2 subfamily.

Its subcellular location is the cytoplasm. The catalysed reaction is CMP + ATP = CDP + ADP. It carries out the reaction dCMP + ATP = dCDP + ADP. The sequence is that of Cytidylate kinase from Haloquadratum walsbyi (strain DSM 16790 / HBSQ001).